The following is a 594-amino-acid chain: METHLYSDLAFEARFADDEQLPLHLVLDQEVLSNEEAETLRYVYYRNVDSAGRSTGRAPGGDEDDAPASDDAEDAVGGDRAFDRERRTWQRACFRVLPRPLELLDYLRQSGLTVTLEKEQRVRMFYAVFTTLGLRCPDNRLSGAQTLHLRLVWPDGSYRDWEFLARDLLREEMEANKRDRQHQLATTTNHRRRGGLRNNLDNGSDRRLPEAAVASLETAVSTPFFEIPNGAGTSSANGDGRFSNLEQRVARLLRGDEEFIYHAGPLEPPSKIRGHELVQLRLDVNPDLMYATDPHDRDEVARTDEWKGAGVSRLREVWDVQHRVRLRVLWYVNSFWRSRELSYDDHEVELYRALDAYRARIAVEYVLIRAVRDEIYAVLRRDGGALPQRFACHVSRNMSWRVVWELCRHALALWMDWADVRSCIIKALTPRLSRGAAAAAQRARRQRERSAPKPQELLFGPRNESGPPAEQTWYADVVRCVRAQVDLGVEVRAARCPRTGLWIVRDRRGRLRRWLSQPEVCVLYVTPDLDFYWVLPGGFAVSSRVTLHGLAQRALRDRFQNFEAVLARGMHVEAGRQEPETPRVSGRRLPFDDL.

Disordered stretches follow at residues G52–G77, N176–D205, A443–P468, and G575–L594. The span at G61–V76 shows a compositional bias: acidic residues.

The protein belongs to the herpesviridae CVC1 protein family. As to quaternary structure, interacts (via C-terminus) with capsid vertex component 2/CVC2.

It localises to the virion. The protein resides in the host nucleus. In terms of biological role, capsid vertex-specific component that plays a role during viral DNA encapsidation, assuring correct genome cleavage and presumably stabilizing capsids that contain full-length viral genomes. This is Capsid vertex component 1 from Homo sapiens (Human).